We begin with the raw amino-acid sequence, 149 residues long: uncharacterized protein (149 aa).

Residues 12-31 traverse the membrane as a helical segment; the sequence is FKNLVIGAVSGVAAAYFLST.

The protein resides in the membrane. This is an uncharacterized protein from Streptococcus pyogenes serotype M6 (strain ATCC BAA-946 / MGAS10394).